Reading from the N-terminus, the 358-residue chain is E3 ubiquitin-protein ligase RFI2 (358 aa).

Residues 1–34 (MAGAKDSGCDDDLRIAGGCDPGKRGNPEDSSSPV) form a disordered region. The segment at 38 to 83 (CSICLESVLDDGTRSKAKLQCGHQFHLDCIGSAFNMKGAMQCPNCR) adopts an RING-type; atypical zinc-finger fold. Disordered regions lie at residues 174 to 201 (GPAATPRTSDNNSTDDHPWNSHSNDHFH) and 248 to 313 (SNQR…DQNV). Basic and acidic residues predominate over residues 187-201 (TDDHPWNSHSNDHFH). Polar residues predominate over residues 248–266 (SNQRSSPAINSYQGSSTQM). Pro residues predominate over residues 299–309 (LPPPPPPPPMP).

The protein localises to the nucleus. The enzyme catalyses S-ubiquitinyl-[E2 ubiquitin-conjugating enzyme]-L-cysteine + [acceptor protein]-L-lysine = [E2 ubiquitin-conjugating enzyme]-L-cysteine + N(6)-ubiquitinyl-[acceptor protein]-L-lysine.. The protein operates within protein modification; protein ubiquitination. Functionally, mediates phytochrome (phyA and phyB)-controlled seedling deetiolation responses such as hypocotyl elongation in response to red and far-red light. Required for light-induced expression of LHCB3 and CHALCONE SYNTHASE (CHS). Negatively regulates CONSTANS (CO) and FLOWERING LOCUS T (FT) expression and photoperiodic flowering. The sequence is that of E3 ubiquitin-protein ligase RFI2 from Arabidopsis thaliana (Mouse-ear cress).